The primary structure comprises 297 residues: AKT-interacting protein (297 aa).

The segment covering 1-13 has biased composition (polar residues); that stretch reads MNLNPFWSMSTNT. The disordered stretch occupies residues 1-45; that stretch reads MNLNPFWSMSTNTGRKRSDGEEQSGEQQQQQRASPARPSFGKKQL. The span at 25-39 shows a compositional bias: low complexity; sequence GEQQQQQRASPARPS. One can recognise a UBC core domain in the interval 79–227; sequence YLEYSLLAEF…VVDSVKLCNS (149 aa). The interval 262-297 is disordered; it reads KRRPEDHHKGLQVSGLSWVKPGSTQPFSKDDNPPQN.

This sequence belongs to the ubiquitin-conjugating enzyme family. FTS subfamily.

It localises to the cytoplasm. It is found in the cell membrane. Functionally, may function to promote vesicle trafficking and/or fusion. May also regulate apoptosis. This is AKT-interacting protein (aktip) from Salmo salar (Atlantic salmon).